The following is a 451-amino-acid chain: Chromosomal replication initiator protein DnaA (451 aa).

A domain I, interacts with DnaA modulators region spans residues 1–73 (MNAHPKEIWE…IRSLQMVTSQ (73 aa)). Residues 73–112 (QKYNVKFLISSELPEEFLTLDTINEQNIKGSIIVSDEMSA) are domain II. A domain III, AAA+ region region spans residues 113-329 (MLNPKYTFTS…GALIRIVAFS (217 aa)). Positions 157, 159, 160, and 161 each coordinate ATP. A domain IV, binds dsDNA region spans residues 330–451 (SLTNKEISVD…NDLTKRLDQQ (122 aa)).

Belongs to the DnaA family. As to quaternary structure, oligomerizes as a right-handed, spiral filament on DNA at oriC.

It is found in the cytoplasm. Its function is as follows. Plays an essential role in the initiation and regulation of chromosomal replication. ATP-DnaA binds to the origin of replication (oriC) to initiate formation of the DNA replication initiation complex once per cell cycle. Binds the DnaA box (a 9 base pair repeat at the origin) and separates the double-stranded (ds)DNA. Forms a right-handed helical filament on oriC DNA; dsDNA binds to the exterior of the filament while single-stranded (ss)DNA is stabiized in the filament's interior. The ATP-DnaA-oriC complex binds and stabilizes one strand of the AT-rich DNA unwinding element (DUE), permitting loading of DNA polymerase. After initiation quickly degrades to an ADP-DnaA complex that is not apt for DNA replication. Binds acidic phospholipids. This is Chromosomal replication initiator protein DnaA from Clostridium kluyveri (strain NBRC 12016).